Here is a 303-residue protein sequence, read N- to C-terminus: Glycine--tRNA ligase alpha subunit (303 aa).

Belongs to the class-II aminoacyl-tRNA synthetase family. As to quaternary structure, tetramer of two alpha and two beta subunits.

The protein resides in the cytoplasm. It catalyses the reaction tRNA(Gly) + glycine + ATP = glycyl-tRNA(Gly) + AMP + diphosphate. In Salmonella paratyphi A (strain ATCC 9150 / SARB42), this protein is Glycine--tRNA ligase alpha subunit.